We begin with the raw amino-acid sequence, 162 residues long: uncharacterized protein (162 aa).

The N-terminal stretch at M1–G24 is a signal peptide. Residue C25 is the site of N-palmitoyl cysteine attachment. A lipid anchor (S-diacylglycerol cysteine) is attached at C25.

It is found in the cell membrane. This is an uncharacterized protein from Bacillus anthracis.